The chain runs to 446 residues: Phosphoglucosamine mutase (446 aa).

The active-site Phosphoserine intermediate is Ser-101. 4 residues coordinate Mg(2+): Ser-101, Asp-240, Asp-242, and Asp-244. Ser-101 carries the phosphoserine modification.

Belongs to the phosphohexose mutase family. Mg(2+) serves as cofactor. In terms of processing, activated by phosphorylation.

The catalysed reaction is alpha-D-glucosamine 1-phosphate = D-glucosamine 6-phosphate. In terms of biological role, catalyzes the conversion of glucosamine-6-phosphate to glucosamine-1-phosphate. The chain is Phosphoglucosamine mutase from Coxiella burnetii (strain CbuK_Q154) (Coxiella burnetii (strain Q154)).